Reading from the N-terminus, the 348-residue chain is Galactose-1-phosphate uridylyltransferase (348 aa).

28–31 (RAKR) contributes to the UDP-alpha-D-glucose binding site. Residues Cys-52 and Cys-55 each coordinate Zn(2+). UDP-alpha-D-glucose-binding positions include Val-61 and 77-78 (ND). Residue His-115 coordinates Zn(2+). Residues Asn-153 and 159 to 161 (GCS) each bind UDP-alpha-D-glucose. His-164 lines the Zn(2+) pocket. His-166 (tele-UMP-histidine intermediate) is an active-site residue. A UDP-alpha-D-glucose-binding site is contributed by Gln-168. Fe cation is bound by residues Glu-182, His-281, His-296, and His-298. UDP-alpha-D-glucose is bound by residues 311-312 (KF), 316-317 (YE), and Gln-323.

This sequence belongs to the galactose-1-phosphate uridylyltransferase type 1 family. It depends on Zn(2+) as a cofactor.

It carries out the reaction alpha-D-galactose 1-phosphate + UDP-alpha-D-glucose = alpha-D-glucose 1-phosphate + UDP-alpha-D-galactose. The protein operates within carbohydrate metabolism; galactose metabolism. The sequence is that of Galactose-1-phosphate uridylyltransferase (galT) from Salmonella typhimurium (strain LT2 / SGSC1412 / ATCC 700720).